The sequence spans 421 residues: Acetylglutamate kinase (421 aa).

Residues 1-252 are acetylglutamate kinase; it reads MASAKEISQY…PLESSVSITR (252 aa). Substrate is bound by residues 59 to 60, arginine 81, and asparagine 170; that span reads AG. An N-acetyltransferase domain is found at 274–420; that stretch reads ERVIRATTWK…HCTQHPPTLI (147 aa).

This sequence in the N-terminal section; belongs to the acetylglutamate kinase family. ArgB subfamily.

It is found in the cytoplasm. The enzyme catalyses N-acetyl-L-glutamate + ATP = N-acetyl-L-glutamyl 5-phosphate + ADP. Its pathway is amino-acid biosynthesis; L-arginine biosynthesis; N(2)-acetyl-L-ornithine from L-glutamate: step 2/4. This is Acetylglutamate kinase (argB) from Xylella fastidiosa (strain Temecula1 / ATCC 700964).